The sequence spans 335 residues: MKLKLKNVFLAYFLVSIAGLLYALVQLGQPCDCLPPLRAAAEQLRQKDLRISQLQAELRRPPPAPAQPPEPEALPTIYVVTPTYARLVQKAELVRLSQTLSLVPRLHWLLVEDAEGPTPLVSGLLAASGLLFTHLVVLTPKAQRLREGEPGWVHPRGVEQRNKALDWLRGRGGAVGGEKDPPPPGTQGVVYFADDDNTYSRELFEEMRWTRGVSVWPVGLVGGLRFEGPQVQDGRVVGFHTAWEPSRPFPVDMAGFAVALPLLLDKPNAQFDSTAPRGHLESSLLSHLVDPKDLEPRAANCTRVLVWHTRTEKPKMKQEEQLQRQGRGSDPAIEV.

At 1–7 the chain is on the cytoplasmic side; the sequence is MKLKLKN. The chain crosses the membrane as a helical; Signal-anchor for type II membrane protein span at residues 8–28; that stretch reads VFLAYFLVSIAGLLYALVQLG. Residues 29–335 are Lumenal-facing; the sequence is QPCDCLPPLR…GRGSDPAIEV (307 aa). Residues 82–84, Asp-113, Arg-156, Arg-161, and 194–196 each bind UDP-alpha-D-glucuronate; these read PTY and DDD. Asp-196 contributes to the Mn(2+) binding site. Residues 243–252 are interaction with galactose moiety of substrate glycoprotein; that stretch reads WEPSRPFPVD. Catalysis depends on Glu-281, which acts as the Proton donor/acceptor. N-linked (GlcNAc...) asparagine glycosylation is present at Asn-300. 308–310 is a UDP-alpha-D-glucuronate binding site; the sequence is HTR. Over residues 312–322 the composition is skewed to basic and acidic residues; that stretch reads EKPKMKQEEQL. Residues 312–335 form a disordered region; that stretch reads EKPKMKQEEQLQRQGRGSDPAIEV.

It belongs to the glycosyltransferase 43 family. Homodimer; disulfide-linked. Interacts with PXYLP1; the interaction increases the 2-phosphoxylose phosphatase activity of PXYLP1 during completion of linkage region formation in a B3GAT3-mediated manner. Requires Mn(2+) as cofactor. Post-translationally, N-glycosylated. In terms of tissue distribution, ubiquitous (but weakly expressed in all tissues examined).

It is found in the golgi apparatus membrane. The protein localises to the golgi apparatus. The protein resides in the cis-Golgi network. It catalyses the reaction 3-O-(beta-D-galactosyl-(1-&gt;3)-beta-D-galactosyl-(1-&gt;4)-beta-D-xylosyl)-L-seryl-[protein] + UDP-alpha-D-glucuronate = 3-O-(beta-D-GlcA-(1-&gt;3)-beta-D-Gal-(1-&gt;3)-beta-D-Gal-(1-&gt;4)-beta-D-Xyl)-L-seryl-[protein] + UDP + H(+). It functions in the pathway protein modification; protein glycosylation. With respect to regulation, inhibited by EDTA. Functionally, glycosaminoglycans biosynthesis. Involved in forming the linkage tetrasaccharide present in heparan sulfate and chondroitin sulfate. Transfers a glucuronic acid moiety from the uridine diphosphate-glucuronic acid (UDP-GlcUA) to the common linkage region trisaccharide Gal-beta-1,3-Gal-beta-1,4-Xyl covalently bound to a Ser residue at the glycosaminylglycan attachment site of proteoglycans. Can also play a role in the biosynthesis of l2/HNK-1 carbohydrate epitope on glycoproteins. Shows strict specificity for Gal-beta-1,3-Gal-beta-1,4-Xyl, exhibiting negligible incorporation into other galactoside substrates including Galbeta1-3Gal beta1-O-benzyl, Galbeta1-4GlcNAc and Galbeta1-4Glc. Stimulates 2-phosphoxylose phosphatase activity of PXYLP1 in presence of uridine diphosphate-glucuronic acid (UDP-GlcUA) during completion of linkage region formation. In Homo sapiens (Human), this protein is Galactosylgalactosylxylosylprotein 3-beta-glucuronosyltransferase 3 (B3GAT3).